A 346-amino-acid polypeptide reads, in one-letter code: Ion-translocating oxidoreductase complex subunit D (346 aa).

4 consecutive transmembrane segments (helical) span residues 20–40, 42–62, 69–91, and 120–140; these read IMIQVMLACLPGLMALTTFFG, GIIIQLVIACVTALVAEGVVL, LASRLGDGSALLTALLLALSLPP, and PFNPAMVGYVVLLISFPVQMT. Residue T187 is modified to FMN phosphoryl threonine. Helical transmembrane passes span 212 to 232, 242 to 262, 264 to 284, 290 to 310, and 314 to 334; these read ASAGWTWANIGFLLGGLYLIW, LSLLAAMLIGAGLGHWLAPVV, APPLLHLFSGATMLGAFFIAT, AATVRGRVIFGALTGLLVWLI, and GGYPDGVAFAVLLANICVPLI.

It belongs to the NqrB/RnfD family. In terms of assembly, the complex is composed of six subunits: RnfA, RnfB, RnfC, RnfD, RnfE and RnfG. FMN serves as cofactor.

The protein resides in the cell inner membrane. Part of a membrane-bound complex that couples electron transfer with translocation of ions across the membrane. The protein is Ion-translocating oxidoreductase complex subunit D of Sodalis glossinidius (strain morsitans).